The primary structure comprises 37 residues: uncharacterized protein (37 aa).

Belongs to the poxviridae A56.5 protein family.

This is an uncharacterized protein from Vaccinia virus (strain Western Reserve) (VACV).